The chain runs to 247 residues: Capsid protein (247 aa).

Residues 1–40 (MWGTSNCACAKFQIRRRYARPYRRRHIRRYRRRRRHFRRR) are DNA-binding. The nuclear localization signals stretch occupies residues 15–44 (RRRYARPYRRRHIRRYRRRRRHFRRRRFTT).

This sequence belongs to the circoviridae capsid protein family. In terms of assembly, homomultimer. Assembles in the nucleus, presumably in an immature form, then migrates to the cytoplasm once assembled as mature virion. Interacts with Rep; this interaction relocates Rep into the nucleus.

Its subcellular location is the host nucleus. It localises to the virion. Its function is as follows. Self-assembles to form the virion icosahedral capsid with a T=1 symmetry. This very small capsid (17 - 22 nm in diameter) allows the virus to be very stable in the environment and resistant to some disinfectants, including detergents. Essential for the initial attachment to heparan sulfate moieties and chondroitin sulfate B of the host cell surface proteoglycans. After attachment, the virus is endocytosed and traffics to the nucleus. The capsid protein binds and transports the viral genome and Rep across the nuclear envelope. This is Capsid protein (Cap) from Beak and feather disease virus (BFDV).